Reading from the N-terminus, the 50-residue chain is Large ribosomal subunit protein bL33 (50 aa).

The protein belongs to the bacterial ribosomal protein bL33 family.

This chain is Large ribosomal subunit protein bL33, found in Sulfurovum sp. (strain NBC37-1).